The following is a 168-amino-acid chain: MAEENQVATEEQQTPFEMQIQRIYIKDVSFEAPNLPNIFHQEWKPQLGFDLDTETREIGEDTYEVVLHINVQTTLEDSNDVAFICEVKQAGVFTIKGIEGIQLAHCLAAKCPEVLYPYARELISSLVNRGTFPALNLSPVNFDALFMDYLARQQAEENGESTTNTTLN.

Belongs to the SecB family. In terms of assembly, homotetramer, a dimer of dimers. One homotetramer interacts with 1 SecA dimer.

The protein resides in the cytoplasm. One of the proteins required for the normal export of preproteins out of the cell cytoplasm. It is a molecular chaperone that binds to a subset of precursor proteins, maintaining them in a translocation-competent state. It also specifically binds to its receptor SecA. This is Protein-export protein SecB from Glaesserella parasuis serovar 5 (strain SH0165) (Haemophilus parasuis).